Reading from the N-terminus, the 400-residue chain is MERNISVEELHQIPTPKKEVEIVERKGIGHPDSVADGIAEAVSRSLSKYYIEHYGRILHHNTDQVEVVGGQSAPKYGGGLVLEPTYILLSGRATTKVGNDRVPFKSITIKAARDYLREHFRHLDVDADVMIDSRIGQGSVDLVEVYDTKKLEANDTSFGVGFAPLSETETMVLNTEKYLNGELKKKMPMVGYDIKVMGFRQKDTINLTVAAAMVDKYIHDADEYFNIKDELKQLVLDNAVEYTDKEVKVYINTADIKEDGKAVGYLTVTGMSMENGDDGSVGRGNRVNGLITPYRAMSMEAAAGKNPVTHVGKLYNVLSNKIANDIVKEEGNDIAEVLVRIVSQIGRPIDDPHVASVQVIYEGNVDHSKHKNNIRNLVDDRLAHISDLTMEFVEGKIPVF.

136–141 (GQGSVD) provides a ligand contact to ATP.

It belongs to the AdoMet synthase 2 family. It depends on Mg(2+) as a cofactor.

It catalyses the reaction L-methionine + ATP + H2O = S-adenosyl-L-methionine + phosphate + diphosphate. It functions in the pathway amino-acid biosynthesis; S-adenosyl-L-methionine biosynthesis; S-adenosyl-L-methionine from L-methionine: step 1/1. Functionally, catalyzes the formation of S-adenosylmethionine from methionine and ATP. The protein is S-adenosylmethionine synthase (mat) of Thermoplasma acidophilum (strain ATCC 25905 / DSM 1728 / JCM 9062 / NBRC 15155 / AMRC-C165).